Consider the following 439-residue polypeptide: Enolase 1 (439 aa).

2 residues coordinate substrate: His-160 and Glu-169. Glu-212 acts as the Proton donor in catalysis. Mg(2+) contacts are provided by Asp-247, Glu-296, and Asp-323. Substrate contacts are provided by Glu-296 and Asp-323. Lys-348 functions as the Proton acceptor in the catalytic mechanism. Substrate is bound by residues 375–378 (SHRS) and Lys-399.

Belongs to the enolase family. In terms of assembly, homodimer. Mg(2+) is required as a cofactor.

The protein resides in the cytoplasm. It catalyses the reaction (2R)-2-phosphoglycerate = phosphoenolpyruvate + H2O. It participates in carbohydrate degradation; glycolysis; pyruvate from D-glyceraldehyde 3-phosphate: step 4/5. This Debaryomyces hansenii (strain ATCC 36239 / CBS 767 / BCRC 21394 / JCM 1990 / NBRC 0083 / IGC 2968) (Yeast) protein is Enolase 1 (ENO1).